Here is a 207-residue protein sequence, read N- to C-terminus: Outer-membrane lipoprotein LolB (207 aa).

An N-terminal signal peptide occupies residues 1–21 (MPLPDFRFIRLLPLAALVLTA). Cys22 carries the N-palmitoyl cysteine lipid modification. Cys22 carries S-diacylglycerol cysteine lipidation.

The protein belongs to the LolB family. Monomer.

Its subcellular location is the cell outer membrane. Its function is as follows. Plays a critical role in the incorporation of lipoproteins in the outer membrane after they are released by the LolA protein. The protein is Outer-membrane lipoprotein LolB of Escherichia coli O6:K15:H31 (strain 536 / UPEC).